Here is a 236-residue protein sequence, read N- to C-terminus: UPF0173 metal-dependent hydrolase DSY1309 (236 aa).

The protein belongs to the UPF0173 family.

The protein is UPF0173 metal-dependent hydrolase DSY1309 of Desulfitobacterium hafniense (strain Y51).